Here is a 261-residue protein sequence, read N- to C-terminus: MSNGSSVSHSANTAPYVELPAFQGPMDLLLHLIQQEKVDIYDIPIARITDQFIQVVRQMEDLDMEVTTEFLVLAAQLLQIKSRYLLPKPVKDVTVEEEGDPRQELVERLLAYRAFKQAAETLGEIQISSGQRYFREVDVDGLRSQFTPADPLAGIHFEALWHAFQRIIERAEQGEEIRTVEPDEIPIEVMVNDVLRRVILHPRGLRFSQLIRGTKRMEIIVSFLALLELLKSGKVHCEQSSQNEEIFVFPTEKAWEFTEGE.

Belongs to the ScpA family. Component of a cohesin-like complex composed of ScpA, ScpB and the Smc homodimer, in which ScpA and ScpB bind to the head domain of Smc. The presence of the three proteins is required for the association of the complex with DNA.

The protein localises to the cytoplasm. Functionally, participates in chromosomal partition during cell division. May act via the formation of a condensin-like complex containing Smc and ScpB that pull DNA away from mid-cell into both cell halves. The protein is Segregation and condensation protein A of Desulfitobacterium hafniense (strain DSM 10664 / DCB-2).